Consider the following 270-residue polypeptide: Acetylglutamate kinase (270 aa).

Substrate-binding positions include 53 to 54, Arg75, and Asn167; that span reads GG.

This sequence belongs to the acetylglutamate kinase family. ArgB subfamily.

The protein localises to the cytoplasm. The enzyme catalyses N-acetyl-L-glutamate + ATP = N-acetyl-L-glutamyl 5-phosphate + ADP. The protein operates within amino-acid biosynthesis; L-arginine biosynthesis; N(2)-acetyl-L-ornithine from L-glutamate: step 2/4. Catalyzes the ATP-dependent phosphorylation of N-acetyl-L-glutamate. The sequence is that of Acetylglutamate kinase from Shewanella halifaxensis (strain HAW-EB4).